The primary structure comprises 296 residues: N-acetylmuramic acid 6-phosphate etherase 2 (296 aa).

An SIS domain is found at 55–218 (IIKSFNQGGR…STISMIGIGK (164 aa)). The active-site Proton donor is the Glu83. The active site involves Glu114.

It belongs to the GCKR-like family. MurNAc-6-P etherase subfamily. As to quaternary structure, homodimer.

The catalysed reaction is N-acetyl-D-muramate 6-phosphate + H2O = N-acetyl-D-glucosamine 6-phosphate + (R)-lactate. It functions in the pathway amino-sugar metabolism; N-acetylmuramate degradation. Functionally, specifically catalyzes the cleavage of the D-lactyl ether substituent of MurNAc 6-phosphate, producing GlcNAc 6-phosphate and D-lactate. The chain is N-acetylmuramic acid 6-phosphate etherase 2 from Enterococcus faecalis (strain ATCC 700802 / V583).